The chain runs to 830 residues: Beta-glucosidase A (830 aa).

Asp-769 is a catalytic residue.

This sequence belongs to the glycosyl hydrolase 3 family.

The enzyme catalyses Hydrolysis of terminal, non-reducing beta-D-glucosyl residues with release of beta-D-glucose.. Its function is as follows. B.fibrisolvens beta-glucosidase hydrolyzes cellobiose to a limited extent, cellotriose to cellobiose and glucose, and cellotetraose and cellopentaose to predominantly glucose. The protein is Beta-glucosidase A (bglA) of Butyrivibrio fibrisolvens.